Reading from the N-terminus, the 757-residue chain is Catalase-peroxidase (757 aa).

A cross-link (tryptophyl-tyrosyl-methioninium (Trp-Tyr) (with M-274)) is located at residues 101-248; that stretch reads WHSAGTYRIG…LAAVQMGLIY (148 aa). His-102 serves as the catalytic Proton acceptor. The interval 213–232 is disordered; sequence VHHPDEHRGAKEKASKNSDS. Positions 248 to 274 form a cross-link, tryptophyl-tyrosyl-methioninium (Tyr-Met) (with W-101); it reads YVNPEGPDGCPDPLASARDIRETFARM. His-289 contributes to the heme b binding site.

Belongs to the peroxidase family. Peroxidase/catalase subfamily. Homodimer or homotetramer. Heme b is required as a cofactor. In terms of processing, formation of the three residue Trp-Tyr-Met cross-link is important for the catalase, but not the peroxidase activity of the enzyme.

It carries out the reaction H2O2 + AH2 = A + 2 H2O. The catalysed reaction is 2 H2O2 = O2 + 2 H2O. Bifunctional enzyme with both catalase and broad-spectrum peroxidase activity. This chain is Catalase-peroxidase, found in Xylella fastidiosa (strain M23).